Here is a 594-residue protein sequence, read N- to C-terminus: uncharacterized protein (594 aa).

Functionally, the presence of the two linear plasmids, termed pGKL1 and pGKL2, in strains of Kluyveromyces lactis confers the killer phenotype to the host cell, by promoting the secretion of a toxin able to inhibit the growth of sensitive strains. This is an uncharacterized protein from Kluyveromyces lactis (strain ATCC 8585 / CBS 2359 / DSM 70799 / NBRC 1267 / NRRL Y-1140 / WM37) (Yeast).